We begin with the raw amino-acid sequence, 251 residues long: Imidazole glycerol phosphate synthase subunit HisF (251 aa).

Catalysis depends on residues aspartate 11 and aspartate 130.

The protein belongs to the HisA/HisF family. Heterodimer of HisH and HisF.

The protein resides in the cytoplasm. It catalyses the reaction 5-[(5-phospho-1-deoxy-D-ribulos-1-ylimino)methylamino]-1-(5-phospho-beta-D-ribosyl)imidazole-4-carboxamide + L-glutamine = D-erythro-1-(imidazol-4-yl)glycerol 3-phosphate + 5-amino-1-(5-phospho-beta-D-ribosyl)imidazole-4-carboxamide + L-glutamate + H(+). It participates in amino-acid biosynthesis; L-histidine biosynthesis; L-histidine from 5-phospho-alpha-D-ribose 1-diphosphate: step 5/9. IGPS catalyzes the conversion of PRFAR and glutamine to IGP, AICAR and glutamate. The HisF subunit catalyzes the cyclization activity that produces IGP and AICAR from PRFAR using the ammonia provided by the HisH subunit. The polypeptide is Imidazole glycerol phosphate synthase subunit HisF (Flavobacterium johnsoniae (strain ATCC 17061 / DSM 2064 / JCM 8514 / BCRC 14874 / CCUG 350202 / NBRC 14942 / NCIMB 11054 / UW101) (Cytophaga johnsonae)).